The following is a 922-amino-acid chain: Translation initiation factor IF-2 (922 aa).

The tract at residues 33–310 (KTASSTVQPP…SKRQKRNEYE (278 aa)) is disordered. Over residues 75-87 (PAAKAAPKAAAKP) the composition is skewed to low complexity. Pro residues-rich tracts occupy residues 88 to 98 (GPKPGPKPGPQ) and 140 to 150 (TPKPGAKPGPK). Composition is skewed to low complexity over residues 151-169 (PGGA…GRAP) and 202-211 (PGSRPGGAKK). 2 stretches are compositionally biased toward gly residues: residues 215–225 (KPGGAKQGGGR) and 248–292 (FGGG…GRPG). Positions 296-305 (RKGRKSKRQK) are enriched in basic residues. The tr-type G domain maps to 418–590 (QRPPVVTVMG…VLLTADASLD (173 aa)). The tract at residues 427–434 (GHVDHGKT) is G1. 427-434 (GHVDHGKT) is a GTP binding site. The tract at residues 452-456 (GITQH) is G2. Residues 477–480 (DTPG) form a G3 region. Residues 477 to 481 (DTPGH) and 531 to 534 (NKID) each bind GTP. The segment at 531-534 (NKID) is G4. Positions 567–569 (SAK) are G5.

It belongs to the TRAFAC class translation factor GTPase superfamily. Classic translation factor GTPase family. IF-2 subfamily.

The protein resides in the cytoplasm. One of the essential components for the initiation of protein synthesis. Protects formylmethionyl-tRNA from spontaneous hydrolysis and promotes its binding to the 30S ribosomal subunits. Also involved in the hydrolysis of GTP during the formation of the 70S ribosomal complex. The chain is Translation initiation factor IF-2 from Corynebacterium jeikeium (strain K411).